The primary structure comprises 200 residues: Guanylate kinase (200 aa).

In terms of domain architecture, Guanylate kinase-like spans 6–184 (GLLIVLSGPS…AVDKLKSILL (179 aa)). 13–20 (GPSGAGKG) is a binding site for ATP.

It belongs to the guanylate kinase family.

It localises to the cytoplasm. The enzyme catalyses GMP + ATP = GDP + ADP. Functionally, essential for recycling GMP and indirectly, cGMP. The protein is Guanylate kinase of Desulfitobacterium hafniense (strain Y51).